We begin with the raw amino-acid sequence, 350 residues long: MERARRRGGGGSGGGRGRGGKNVGGPGLSKSRLYPQAQHSHYPHYSASATPNQSGGTSEIQELASKRVDIQKKRFYLDVKQSSRGRFLKIAEVWIGRGRQDNIRKSKLTLSLSVAAELKDCLGDFIEHYAHLGLKGHRQEHGQSKEQVSRRRQKHSAPSPPVSVGSEEHPHSVLKTDYIERDNRKYYLDLKENQRGRFLRIRQTMMRGTGMIGYFGHSLGQDQTIVLPAQGMIEFRDALVQLIEDYGEGDIEERRCGDDDPLELPEGTSFRVDNKRFYFDVGSNKYGIFLKVSEVRPPYRNTITVPFKAWTRFGENFIKYEEEMRKICNSHKEKRMDGRRASGEEQECLD.

Disordered stretches follow at residues 1 to 59 and 136 to 172; these read MERA…GTSE and GHRQ…HPHS. Residues 9 to 27 are compositionally biased toward gly residues; that stretch reads GGGSGGGRGRGGKNVGGPG. Positions 47–59 are enriched in polar residues; the sequence is ASATPNQSGGTSE. Residues 54-296 mediate DNA binding; the sequence is SGGTSEIQEL…GIFLKVSEVR (243 aa). Positions 137 to 149 are enriched in basic and acidic residues; sequence HRQEHGQSKEQVS. A phosphoserine mark is found at serine 163, serine 166, and serine 342.

The protein belongs to the PUR DNA-binding protein family. In terms of tissue distribution, isoform 1 is expressed in testis. Isoform 2 is expressed in blastocyst and kidney.

It is found in the nucleus. In Mus musculus (Mouse), this protein is Purine-rich element-binding protein gamma (Purg).